A 147-amino-acid polypeptide reads, in one-letter code: 3-dehydroquinate dehydratase (147 aa).

Catalysis depends on tyrosine 24, which acts as the Proton acceptor. Positions 75, 81, and 88 each coordinate substrate. Histidine 101 serves as the catalytic Proton donor. Substrate is bound by residues isoleucine 102–serine 103 and arginine 112.

It belongs to the type-II 3-dehydroquinase family. In terms of assembly, homododecamer.

The catalysed reaction is 3-dehydroquinate = 3-dehydroshikimate + H2O. Its pathway is metabolic intermediate biosynthesis; chorismate biosynthesis; chorismate from D-erythrose 4-phosphate and phosphoenolpyruvate: step 3/7. Its function is as follows. Catalyzes a trans-dehydration via an enolate intermediate. This chain is 3-dehydroquinate dehydratase, found in Cereibacter sphaeroides (strain ATCC 17023 / DSM 158 / JCM 6121 / CCUG 31486 / LMG 2827 / NBRC 12203 / NCIMB 8253 / ATH 2.4.1.) (Rhodobacter sphaeroides).